Here is a 438-residue protein sequence, read N- to C-terminus: Adenosylhomocysteinase (438 aa).

The substrate site is built by threonine 61, aspartate 137, and glutamate 162. 163-165 contributes to the NAD(+) binding site; it reads TTT. Substrate is bound by residues lysine 192 and aspartate 196. NAD(+)-binding positions include asparagine 197, 226 to 231, glutamate 249, asparagine 284, 305 to 307, and asparagine 352; these read GYGDVG and IGH.

Belongs to the adenosylhomocysteinase family. NAD(+) serves as cofactor.

The protein resides in the cytoplasm. The enzyme catalyses S-adenosyl-L-homocysteine + H2O = L-homocysteine + adenosine. The protein operates within amino-acid biosynthesis; L-homocysteine biosynthesis; L-homocysteine from S-adenosyl-L-homocysteine: step 1/1. Its function is as follows. May play a key role in the regulation of the intracellular concentration of adenosylhomocysteine. The sequence is that of Adenosylhomocysteinase from Flavobacterium johnsoniae (strain ATCC 17061 / DSM 2064 / JCM 8514 / BCRC 14874 / CCUG 350202 / NBRC 14942 / NCIMB 11054 / UW101) (Cytophaga johnsonae).